Consider the following 114-residue polypeptide: Fluoride-specific ion channel FluC 1 (114 aa).

3 helical membrane passes run 28 to 48, 56 to 76, and 91 to 111; these read VFPW…GFLH, ILLL…TFQV, and IIYL…GSWL. Residues Gly66 and Thr69 each contribute to the Na(+) site.

This sequence belongs to the fluoride channel Fluc/FEX (TC 1.A.43) family.

It localises to the cell membrane. The catalysed reaction is fluoride(in) = fluoride(out). Na(+) is not transported, but it plays an essential structural role and its presence is essential for fluoride channel function. Fluoride-specific ion channel. Important for reducing fluoride concentration in the cell, thus reducing its toxicity. The polypeptide is Fluoride-specific ion channel FluC 1 (Ligilactobacillus salivarius (strain UCC118) (Lactobacillus salivarius)).